Here is a 351-residue protein sequence, read N- to C-terminus: MKKSLIALAVLAASGAAMAQSSVTLFGIVDTNVAYVNKDAAGDSRYGLGTSGASTSRLGLRGTEDLGGGLKAGFWLEGEIFGDDGNASGFNFKRRSTVSLSGNFGEVRLGRDLVPTSQKLTSYDLFSATGIGPFMGFRNWAAGQGADDNGIRANNLISYYTPNFGGFNAGFGYAFDEKQTIGTADSVGRYIGGYVAYDNGPLSASLGLAQQKTAVGGLATDRDEITLGASYNFGVAKLSGLLQQTKFKRDIGGDIKTNSYMLGASAPVGGVGEVKLQYALYDQKAIDSKAHQITLGYVHNLSKRTALYGNLAFLKNKDASTLGLQAKGVYAGGVQAGESQTGVQVGIRHAF.

The N-terminal stretch at Met-1–Ala-19 is a signal peptide. Gln-20 carries the pyrrolidone carboxylic acid modification.

To bacterial outer membrane proteins and porins. Homotrimer.

The protein resides in the cell outer membrane. Functionally, forms anion selective channels. The sequence is that of Outer membrane porin protein 32 (omp32) from Delftia acidovorans (Pseudomonas acidovorans).